A 71-amino-acid polypeptide reads, in one-letter code: DNA-directed RNA polymerase subunit epsilon (71 aa).

The protein belongs to the RNA polymerase subunit epsilon family. In terms of assembly, RNAP is composed of a core of 2 alpha, a beta and a beta' subunit. The core is associated with a delta subunit, and at least one of epsilon or omega. When a sigma factor is associated with the core the holoenzyme is formed, which can initiate transcription.

The enzyme catalyses RNA(n) + a ribonucleoside 5'-triphosphate = RNA(n+1) + diphosphate. Functionally, a non-essential component of RNA polymerase (RNAP). The polypeptide is DNA-directed RNA polymerase subunit epsilon (Geobacillus kaustophilus (strain HTA426)).